The chain runs to 338 residues: Nicotinate-nucleotide--dimethylbenzimidazole phosphoribosyltransferase (338 aa).

Catalysis depends on Glu-305, which acts as the Proton acceptor.

Belongs to the CobT family.

The catalysed reaction is 5,6-dimethylbenzimidazole + nicotinate beta-D-ribonucleotide = alpha-ribazole 5'-phosphate + nicotinate + H(+). The protein operates within nucleoside biosynthesis; alpha-ribazole biosynthesis; alpha-ribazole from 5,6-dimethylbenzimidazole: step 1/2. Its function is as follows. Catalyzes the synthesis of alpha-ribazole-5'-phosphate from nicotinate mononucleotide (NAMN) and 5,6-dimethylbenzimidazole (DMB). The chain is Nicotinate-nucleotide--dimethylbenzimidazole phosphoribosyltransferase from Rhizobium leguminosarum bv. trifolii (strain WSM2304).